The following is a 324-amino-acid chain: MLLPIIMLTSGVANTVLSKYQDSIAEESEPIKSMAVLQSLNIFLGEACLWFYVLYKRHSQGPGYESLDHLPLKHKVFMALPAIMDICGSTLMNVGLLYTSASIYQMTRGSLIIFVALFATTLLKRTIGQLQWLSLSFVVLGVAIVGYSGSSSSIGSNPILGITAVLIGQFFLATQFTIEEYILSFIQVDPSELVAYEGTYGVFFVLLGMIISYYFIGSTTAGYHGWFDYSHVISRFNEVPALYVISGVILVSIAFFNVSGLAITKLHSATTRSLLDIARTFGIWIIAMAMGMESFHLLQFLGFVLLIYGIFTYHSIIKFPLAES.

Transmembrane regions (helical) follow at residues 34–54 (MAVL…FYVL), 76–96 (VFMA…NVGL), 103–123 (IYQM…TTLL), 127–147 (IGQL…IVGY), 158–178 (PILG…QFTI), 198–218 (GTYG…FIGS), 243–263 (YVIS…GLAI), 275–295 (LDIA…MESF), and 297–317 (LLQF…HSII).

Its subcellular location is the membrane. This is an uncharacterized protein from Schizosaccharomyces pombe (strain 972 / ATCC 24843) (Fission yeast).